We begin with the raw amino-acid sequence, 194 residues long: Peptidyl-tRNA hydrolase (194 aa).

A tRNA-binding site is contributed by Tyr-17. The active-site Proton acceptor is His-22. The tRNA site is built by Tyr-68, Asn-70, and Asn-116.

This sequence belongs to the PTH family. In terms of assembly, monomer.

It is found in the cytoplasm. It carries out the reaction an N-acyl-L-alpha-aminoacyl-tRNA + H2O = an N-acyl-L-amino acid + a tRNA + H(+). In terms of biological role, hydrolyzes ribosome-free peptidyl-tRNAs (with 1 or more amino acids incorporated), which drop off the ribosome during protein synthesis, or as a result of ribosome stalling. Its function is as follows. Catalyzes the release of premature peptidyl moieties from peptidyl-tRNA molecules trapped in stalled 50S ribosomal subunits, and thus maintains levels of free tRNAs and 50S ribosomes. This Pseudomonas savastanoi pv. phaseolicola (strain 1448A / Race 6) (Pseudomonas syringae pv. phaseolicola (strain 1448A / Race 6)) protein is Peptidyl-tRNA hydrolase.